Here is an 89-residue protein sequence, read N- to C-terminus: Small ribosomal subunit protein bS20 (89 aa).

This sequence belongs to the bacterial ribosomal protein bS20 family.

Its function is as follows. Binds directly to 16S ribosomal RNA. This chain is Small ribosomal subunit protein bS20, found in Syntrophus aciditrophicus (strain SB).